A 114-amino-acid chain; its full sequence is Neurotrophic factor BDNF precursor form (114 aa).

3 cysteine pairs are disulfide-bonded: Cys14–Cys81, Cys59–Cys110, and Cys69–Cys112.

It belongs to the NGF-beta family.

It is found in the secreted. Promotes the survival of neuronal populations that are all located either in the central nervous system or directly connected to it. In Xenopus laevis (African clawed frog), this protein is Neurotrophic factor BDNF precursor form (bdnf).